We begin with the raw amino-acid sequence, 183 residues long: Nascent polypeptide-associated complex subunit beta (183 aa).

The region spanning 62-127 is the NAC-A/B domain; it reads GADDKKLQTT…GEEKELTELV (66 aa). The disordered stretch occupies residues 150–183; the sequence is QNMQKQAGTEGKKDEDEDDIPDLVEGENFESNVE. Residues 164–183 show a composition bias toward acidic residues; it reads EDEDDIPDLVEGENFESNVE.

It belongs to the NAC-beta family. In terms of assembly, part of the nascent polypeptide-associated complex (NAC), consisting of egd2 and egd1. NAC associates with ribosomes via egd1.

Its subcellular location is the cytoplasm. It is found in the nucleus. In terms of biological role, component of the nascent polypeptide-associated complex (NAC), a dynamic component of the ribosomal exit tunnel, protecting the emerging polypeptides from interaction with other cytoplasmic proteins to ensure appropriate nascent protein targeting. The NAC complex also promotes mitochondrial protein import by enhancing productive ribosome interactions with the outer mitochondrial membrane and blocks the inappropriate interaction of ribosomes translating non-secretory nascent polypeptides with translocation sites in the membrane of the endoplasmic reticulum. EGD1 may act as a transcription factor that exert a negative effect on the expression of several genes that are transcribed by RNA polymerase II. This chain is Nascent polypeptide-associated complex subunit beta (egd1), found in Neosartorya fischeri (strain ATCC 1020 / DSM 3700 / CBS 544.65 / FGSC A1164 / JCM 1740 / NRRL 181 / WB 181) (Aspergillus fischerianus).